Reading from the N-terminus, the 216-residue chain is Large ribosomal subunit protein uL3 (216 aa).

Q153 bears the N5-methylglutamine mark.

Belongs to the universal ribosomal protein uL3 family. Part of the 50S ribosomal subunit. Forms a cluster with proteins L14 and L19. Methylated by PrmB.

Functionally, one of the primary rRNA binding proteins, it binds directly near the 3'-end of the 23S rRNA, where it nucleates assembly of the 50S subunit. The protein is Large ribosomal subunit protein uL3 of Burkholderia multivorans (strain ATCC 17616 / 249).